The following is a 545-amino-acid chain: MAKEIKFDMESRDLLKKGVDALANAVKVTLGPKGRNVILSKTYGAPHITKDGVSVAKEIELECPFENMGAQLVKEVASKTNDDAGDGTTTATILAQSIIGVGLKNVTAGANPMDLKRGIDKAVKAVVTHIAGMAKEVGDDFQKIEHVAKISANGDENIGSLIAEAMRKVKKEGVITVEEAKGTDTTVEVVEGMQFDRGYISPYFVTNTDKMEVQMENPFILIYDKKISVLKEMLPILEQTVQTGKPLLIIAEDIDSEALATLVVNRLRGSLKICAVKAPGFGDRRKAMLEDIAILTGGTVISEETGLKLENATMDMLGTAEKVTVDKDNTTIVNGAGNKEGIASRITQIKAQIENTTSDYDREKLQERLAKLAGGVAVLYVGAASEVEMKEKKDRVEDALSATRAAIEEGTVPGGGTAYIRAIAALEGLKGENEDETTGIEIVKRAIEEPLRQIVANAGKEGAVVVQKVKEGKDDFGYNARTDVFENLYSTGVIDPAKVTRVALENAASIAGMFLTTECVIADKKEDNPAAPAMPGGMGGMGGMM.

ATP is bound by residues Thr29–Pro32, Lys50, Asp86–Thr90, Gly415, and Asp495.

This sequence belongs to the chaperonin (HSP60) family. As to quaternary structure, forms a cylinder of 14 subunits composed of two heptameric rings stacked back-to-back. Interacts with the co-chaperonin GroES.

The protein resides in the cytoplasm. The catalysed reaction is ATP + H2O + a folded polypeptide = ADP + phosphate + an unfolded polypeptide.. Together with its co-chaperonin GroES, plays an essential role in assisting protein folding. The GroEL-GroES system forms a nano-cage that allows encapsulation of the non-native substrate proteins and provides a physical environment optimized to promote and accelerate protein folding. The chain is Chaperonin GroEL from Porphyromonas gingivalis (strain ATCC 33277 / DSM 20709 / CIP 103683 / JCM 12257 / NCTC 11834 / 2561).